A 161-amino-acid polypeptide reads, in one-letter code: Nucleotide-binding protein PputGB1_4497 (161 aa).

The protein belongs to the YajQ family.

Functionally, nucleotide-binding protein. This Pseudomonas putida (strain GB-1) protein is Nucleotide-binding protein PputGB1_4497.